The chain runs to 346 residues: MSWLTNLPPGLKNVFGKKDTPENLWIKCPKSGDLVYKDDLEASLFVTPAGAHLRVGPDLRFKSMFDGSEYEELELPEVVKDPLKFKDDRKYVDRLKSSRAKTGREDCMAAAIGKIGKQNAVVLVQDFAFMGGSLGMAAGEAFITAAEKALETKSALIICTASGGARMQEGALSLMQMPRTTVAITELKDASLPYIVVLTDPTTGGVAASYAMIGDIHIGEPEAMVAFAGARVIEQTIREKLPEGFQRAEFLRERGMVDMVVDRRDLPAKLGQILSMLMGGKPLPEVEPIAVADVEELEAAEAEAAPDEVVEVEAPAVDEIVEEKPAATKAKPRSKAKSKAAPKTDE.

Positions 24-292 constitute a CoA carboxyltransferase N-terminal domain; sequence LWIKCPKSGD…LPEVEPIAVA (269 aa). Positions 300-311 are enriched in acidic residues; that stretch reads AEAEAAPDEVVE. Residues 300–346 are disordered; it reads AEAEAAPDEVVEVEAPAVDEIVEEKPAATKAKPRSKAKSKAAPKTDE. Positions 330-340 are enriched in basic residues; sequence AKPRSKAKSKA.

This sequence belongs to the AccD/PCCB family. As to quaternary structure, acetyl-CoA carboxylase is a heterohexamer composed of biotin carboxyl carrier protein (AccB), biotin carboxylase (AccC) and two subunits each of ACCase subunit alpha (AccA) and ACCase subunit beta (AccD).

The protein resides in the cytoplasm. It carries out the reaction N(6)-carboxybiotinyl-L-lysyl-[protein] + acetyl-CoA = N(6)-biotinyl-L-lysyl-[protein] + malonyl-CoA. Its pathway is lipid metabolism; malonyl-CoA biosynthesis; malonyl-CoA from acetyl-CoA: step 1/1. Its function is as follows. Component of the acetyl coenzyme A carboxylase (ACC) complex. Biotin carboxylase (BC) catalyzes the carboxylation of biotin on its carrier protein (BCCP) and then the CO(2) group is transferred by the transcarboxylase to acetyl-CoA to form malonyl-CoA. This chain is Acetyl-coenzyme A carboxylase carboxyl transferase subunit beta, found in Hirschia baltica (strain ATCC 49814 / DSM 5838 / IFAM 1418).